A 339-amino-acid chain; its full sequence is MSGQLERCEREWHELEGEFQELQETHRIYKQKLEELAALQTLCSSSISKQKKHLKDLKLTLQRCKRHASREEAELVQQMAANIKERQDVFFDMEAYLPKKNGLYLNLVLGNVNVTLLSNQAKFAYKDEYEKFKLYLTIILLLGAVACRFVLHYRVTDEVFNFLLVWYYCTLTIRESILISNGSRIKGWWVSHHYVSTFLSGVMLTWPNGPIYQKFRNQFLAFSIFQSCVQFLQYYYQRGCLYRLRALGERNHLDLTVEGFQSWMWRGLTFLLPFLFCGHFWQLYNAVTLFELSSHEECREWQVFVLAFTFLILFLGNFLTTLKVVHAKLQKNRGKTKQP.

Residues 1–77 (MSGQLERCER…ASREEAELVQ (77 aa)) adopt a coiled-coil conformation. 6 consecutive transmembrane segments (helical) span residues 102–124 (GLYL…AKFA), 132–152 (FKLY…FVLH), 159–179 (VFNF…SILI), 187–207 (GWWV…LTWP), 270–290 (FLLP…VTLF), and 302–322 (QVFV…LTTL).

This sequence belongs to the TMEM120 family. As to quaternary structure, heterooligomer with TMEM120A.

It is found in the nucleus inner membrane. In terms of biological role, necessary for efficient adipogenesis. Does not show ion channel activity. The sequence is that of Transmembrane protein 120B from Homo sapiens (Human).